Reading from the N-terminus, the 137-residue chain is DNA-directed RNA polymerase I subunit RPA14 (137 aa).

The disordered stretch occupies residues 100–137 (PPAQDFSAAPIQVSTTEKKETSIGVSATGGKKTTFADE). The residue at position 121 (Ser-121) is a Phosphoserine.

In terms of assembly, component of the RNA polymerase I (Pol I) complex consisting of 14 subunits: RPA135, RPA190, RPC40, RPA14, RPB5, RPO26, RPA43, RPB8, RPA12, RPB10, RPC19, RPC10, RPA49 and RPA34. The complex is composed of a horseshoe-shaped core containing ten subunits (RPA135, RPA190, RPB5, RPO26, RPB8, RPB10, RPC10, RPA12, RPC19 and RPC40) where RPA135 and RPA190 form the DNA-binding cleft. Outside of the core, RPA14 and RPA43 form the stalk that mediates interactions with transcription initiation factors and newly synthesized RNA. In terms of processing, the N-terminus is blocked.

The protein resides in the nucleus. The protein localises to the nucleolus. In terms of biological role, DNA-dependent RNA polymerases catalyze the transcription of DNA into RNA using the four ribonucleoside triphosphates as substrates. Component of RNA polymerase I (Pol I) which synthesizes ribosomal RNA precursors. RPA14 seems to play a role in the stability of subunits RPO26 and RPA43. In vitro, the RPA14-RPA43 subcomplex binds single-stranded RNA. The protein is DNA-directed RNA polymerase I subunit RPA14 (RPA14) of Saccharomyces cerevisiae (strain ATCC 204508 / S288c) (Baker's yeast).